We begin with the raw amino-acid sequence, 227 residues long: Fibrillarin-like rRNA/tRNA 2'-O-methyltransferase (227 aa).

S-adenosyl-L-methionine contacts are provided by residues 82–83 (TT), 100–101 (EF), 125–126 (DA), and 145–148 (DVAQ).

It belongs to the methyltransferase superfamily. Fibrillarin family. Interacts with nop5. Component of box C/D small ribonucleoprotein (sRNP) particles that contain rpl7ae, FlpA and nop5, plus a guide RNA.

Functionally, involved in pre-rRNA and tRNA processing. Utilizes the methyl donor S-adenosyl-L-methionine to catalyze the site-specific 2'-hydroxyl methylation of ribose moieties in rRNA and tRNA. Site specificity is provided by a guide RNA that base pairs with the substrate. Methylation occurs at a characteristic distance from the sequence involved in base pairing with the guide RNA. The sequence is that of Fibrillarin-like rRNA/tRNA 2'-O-methyltransferase from Methanosarcina mazei (strain ATCC BAA-159 / DSM 3647 / Goe1 / Go1 / JCM 11833 / OCM 88) (Methanosarcina frisia).